Consider the following 375-residue polypeptide: o-succinylbenzoate synthase (375 aa).

The Proton donor role is filled by K166. Mg(2+) contacts are provided by D191, E216, and D241. The active-site Proton acceptor is the K265.

This sequence belongs to the mandelate racemase/muconate lactonizing enzyme family. MenC type 2 subfamily. As to quaternary structure, homotetramer. Requires a divalent metal cation as cofactor.

The enzyme catalyses (1R,6R)-6-hydroxy-2-succinyl-cyclohexa-2,4-diene-1-carboxylate = 2-succinylbenzoate + H2O. It carries out the reaction N-acetyl-D-methionine = N-acetyl-L-methionine. It catalyses the reaction N-acetyl-D-phenylalanine = N-acetyl-L-phenylalanine. Its pathway is quinol/quinone metabolism; 1,4-dihydroxy-2-naphthoate biosynthesis; 1,4-dihydroxy-2-naphthoate from chorismate: step 4/7. It participates in quinol/quinone metabolism; menaquinone biosynthesis. Functionally, converts 2-succinyl-6-hydroxy-2,4-cyclohexadiene-1-carboxylate (SHCHC) to 2-succinylbenzoate (OSB). Also acts as a N-succinylamino acid racemase (NSAR) that catalyzes the racemization of various N-succinylamino acids, including N-succinyl-alanine and N-succinyl-phenylalanine. Can catalyze the racemization of a broad range of N-acylamino acids, including N-acetyl-methionine, N-acetyl-phenylalanine, N-carbamoyl-methionine, N-formyl-D-methionine, N-formyl-D-norleucine and N-carbamoyl-D-norleucine. May be a bifunctional enzyme involved in menaquinone biosynthesis and in an irreversible pathway for the conversion of D- to L-amino acids, thereby facilitating the survival and/or growth of the organism. This is o-succinylbenzoate synthase from Geobacillus kaustophilus.